The sequence spans 124 residues: Fluoride-specific ion channel FluC (124 aa).

The next 4 helical transmembrane spans lie at 4–24 (VIFIGIFGALGCLCRYYLSGW), 32–52 (AFPYGTFAVNIIGAFLIGLIM), 68–88 (GLTIGFLGGLTTFSTFSYETF), and 96–116 (LLIASVNVLTSVLVCLVFTWL). Na(+)-binding residues include Gly-75 and Thr-78.

Belongs to the fluoride channel Fluc/FEX (TC 1.A.43) family.

It localises to the cell inner membrane. The catalysed reaction is fluoride(in) = fluoride(out). Na(+) is not transported, but it plays an essential structural role and its presence is essential for fluoride channel function. Its function is as follows. Fluoride-specific ion channel. Important for reducing fluoride concentration in the cell, thus reducing its toxicity. The protein is Fluoride-specific ion channel FluC of Geotalea daltonii (strain DSM 22248 / JCM 15807 / FRC-32) (Geobacter daltonii).